The following is a 273-amino-acid chain: Undecaprenyl-diphosphatase (273 aa).

8 consecutive transmembrane segments (helical) span residues 3-23 (IIEL…EFAP), 48-68 (GANT…VVVF), 89-109 (LTLM…VLFE), 116-136 (LFST…MIAA), 151-171 (ITYK…WPGF), 192-212 (ADFT…ISLL), 225-245 (FFVV…RFFL), and 253-273 (LVPF…VYFA).

This sequence belongs to the UppP family.

It is found in the cell membrane. The enzyme catalyses di-trans,octa-cis-undecaprenyl diphosphate + H2O = di-trans,octa-cis-undecaprenyl phosphate + phosphate + H(+). In terms of biological role, catalyzes the dephosphorylation of undecaprenyl diphosphate (UPP). Confers resistance to bacitracin. This chain is Undecaprenyl-diphosphatase, found in Anoxybacillus flavithermus (strain DSM 21510 / WK1).